The chain runs to 540 residues: MPKIIAFDEEARRGLERGMNQLADAVKVTLGPKGRNVVLEKKWGVPTITNDGVSIAKEIELEDPYEKIGAELVKEVAKKTNDVAGDGTTTATILAQALVREGLRNVAAGANPLGLKKGIEVAVERVSEELSKQAKEVETKEQIASTASISAGDSAIGGLIAEALDKVGKEGVVTVEESNTFGLELELTEGMRFDKGYISPYFVTDADRQEAVLDDPYILIVNSKIAAVKDLLPLLEKVMQTSKPLVIISEDVEGEALATLVVNKIRGTFKSVAVKAPGFGDRRKAILGDIAILTGGQVISEDVGLKLESTSLDLLGRARKIVVTKDETTVVEGSGDPDQIAGRVSQIRNEIDKSDSDYDREKLQERLAKLAGGVAVIKVGAATEVELKEKKHRIEDAVSNAKAAVEEGIVAGGGVALLQASITAFEKLDLSGDEATGANIVRLALEAPIKQIAFNSGLEGGVVVDKVRNLPTGHGLNAATGEYVDLIATGIIDPAKVTRSALQNAASIAGLFLTTEAVIADKPEKNPAPAVPGGGGEMDF.

Residues 29–32 (TLGP), 86–90 (DGTTT), Gly-413, 477–479 (NAA), and Asp-493 contribute to the ATP site.

The protein belongs to the chaperonin (HSP60) family. As to quaternary structure, forms a cylinder of 14 subunits composed of two heptameric rings stacked back-to-back. Interacts with the co-chaperonin GroES.

The protein localises to the cytoplasm. The catalysed reaction is ATP + H2O + a folded polypeptide = ADP + phosphate + an unfolded polypeptide.. In terms of biological role, together with its co-chaperonin GroES, plays an essential role in assisting protein folding. The GroEL-GroES system forms a nano-cage that allows encapsulation of the non-native substrate proteins and provides a physical environment optimized to promote and accelerate protein folding. The chain is Chaperonin GroEL 4 from Frankia alni (strain DSM 45986 / CECT 9034 / ACN14a).